The chain runs to 364 residues: Ribosomal RNA large subunit methyltransferase F (364 aa).

The disordered stretch occupies residues Met-1–Arg-52. Polar residues predominate over residues Thr-25–Lys-38.

This sequence belongs to the methyltransferase superfamily. METTL16/RlmF family.

The protein localises to the cytoplasm. It carries out the reaction adenosine(1618) in 23S rRNA + S-adenosyl-L-methionine = N(6)-methyladenosine(1618) in 23S rRNA + S-adenosyl-L-homocysteine + H(+). In terms of biological role, specifically methylates the adenine in position 1618 of 23S rRNA. This chain is Ribosomal RNA large subunit methyltransferase F, found in Shewanella sp. (strain ANA-3).